The primary structure comprises 763 residues: Polyribonucleotide nucleotidyltransferase (763 aa).

Mg(2+)-binding residues include Asp-526 and Asp-532. The 60-residue stretch at 592-651 folds into the KH domain; sequence PRITTIKVPVDKIGEVIGPKGKMINSITEETGAQISIEDDGTVFVGAADGLSAQAAIDKI. The 70-residue stretch at 663 to 732 folds into the S1 motif domain; sequence GERFLGTVVK…NRGKISLVLV (70 aa). Residues 739 to 763 are disordered; the sequence is SAESAGDKGAEKAEGAAADVTPAEA. The span at 743-752 shows a compositional bias: basic and acidic residues; it reads AGDKGAEKAE.

Belongs to the polyribonucleotide nucleotidyltransferase family. It depends on Mg(2+) as a cofactor.

The protein localises to the cytoplasm. It carries out the reaction RNA(n+1) + phosphate = RNA(n) + a ribonucleoside 5'-diphosphate. Involved in mRNA degradation. Catalyzes the phosphorolysis of single-stranded polyribonucleotides processively in the 3'- to 5'-direction. This Mycolicibacterium smegmatis (strain ATCC 700084 / mc(2)155) (Mycobacterium smegmatis) protein is Polyribonucleotide nucleotidyltransferase.